A 272-amino-acid chain; its full sequence is Dermonecrotic toxin SpeSicTox-betaIB1a (272 aa).

His5 is an active-site residue. Glu25 and Asp27 together coordinate Mg(2+). The active-site Nucleophile is His41. 2 disulfides stabilise this stretch: Cys45/Cys51 and Cys47/Cys191. Mg(2+) is bound at residue Asp85.

Belongs to the arthropod phospholipase D family. Class II subfamily. Requires Mg(2+) as cofactor. As to expression, expressed by the venom gland.

Its subcellular location is the secreted. It carries out the reaction an N-(acyl)-sphingosylphosphocholine = an N-(acyl)-sphingosyl-1,3-cyclic phosphate + choline. It catalyses the reaction an N-(acyl)-sphingosylphosphoethanolamine = an N-(acyl)-sphingosyl-1,3-cyclic phosphate + ethanolamine. The enzyme catalyses a 1-acyl-sn-glycero-3-phosphocholine = a 1-acyl-sn-glycero-2,3-cyclic phosphate + choline. The catalysed reaction is a 1-acyl-sn-glycero-3-phosphoethanolamine = a 1-acyl-sn-glycero-2,3-cyclic phosphate + ethanolamine. Its function is as follows. Dermonecrotic toxins cleave the phosphodiester linkage between the phosphate and headgroup of certain phospholipids (sphingolipid and lysolipid substrates), forming an alcohol (often choline) and a cyclic phosphate. This toxin acts on sphingomyelin (SM). It may also act on ceramide phosphoethanolamine (CPE), lysophosphatidylcholine (LPC) and lysophosphatidylethanolamine (LPE), but not on lysophosphatidylserine (LPS), and lysophosphatidylglycerol (LPG). It acts by transphosphatidylation, releasing exclusively cyclic phosphate products as second products. Induces dermonecrosis, hemolysis, increased vascular permeability, edema, inflammatory response, and platelet aggregation. This chain is Dermonecrotic toxin SpeSicTox-betaIB1a, found in Sicarius peruensis (Six-eyed sand spider).